Here is a 182-residue protein sequence, read N- to C-terminus: Probable nicotinate-nucleotide adenylyltransferase (182 aa).

Belongs to the NadD family.

It carries out the reaction nicotinate beta-D-ribonucleotide + ATP + H(+) = deamido-NAD(+) + diphosphate. It functions in the pathway cofactor biosynthesis; NAD(+) biosynthesis; deamido-NAD(+) from nicotinate D-ribonucleotide: step 1/1. Catalyzes the reversible adenylation of nicotinate mononucleotide (NaMN) to nicotinic acid adenine dinucleotide (NaAD). This is Probable nicotinate-nucleotide adenylyltransferase from Aliarcobacter butzleri (strain RM4018) (Arcobacter butzleri).